The sequence spans 648 residues: Replication restart protein PriA (648 aa).

A Helicase ATP-binding domain is found at 131–297 (TILNESNKPT…EIGKYQLVTL (167 aa)). 144–151 (GVTGSGKT) contributes to the ATP binding site. The DEAH box signature appears at 240–243 (DEEH). Zn(2+)-binding residues include cysteine 358, cysteine 361, cysteine 367, cysteine 370, cysteine 385, cysteine 388, cysteine 398, and cysteine 401. The region spanning 393–548 (KIFSSCPECL…SFFANELEIR (156 aa)) is the Helicase C-terminal domain.

It belongs to the helicase family. PriA subfamily. Component of the replication restart primosome. The cofactor is Zn(2+).

The catalysed reaction is Couples ATP hydrolysis with the unwinding of duplex DNA by translocating in the 3'-5' direction.. It carries out the reaction ATP + H2O = ADP + phosphate + H(+). Functionally, initiates the restart of stalled replication forks, which reloads the replicative helicase on sites other than the origin of replication. Recognizes and binds to abandoned replication forks and remodels them to uncover a helicase loading site. Promotes assembly of the primosome at these replication forks. This chain is Replication restart protein PriA, found in Rickettsia felis (strain ATCC VR-1525 / URRWXCal2) (Rickettsia azadi).